The primary structure comprises 714 residues: Solute carrier family 12 member 8 (714 aa).

The next 6 helical transmembrane spans lie at 37-60, 72-93, 99-116, 123-142, 154-173, and 185-205; these read VLFG…VLFL, LLGM…LSGI, SSIG…VLGG, GLLY…TGFA, IWAV…GINL, and LLLF…FTHL. Asparagine 221 carries an N-linked (GlcNAc...) asparagine glycan. 5 consecutive transmembrane segments (helical) span residues 233–254, 266–289, 309–331, 360–377, and 383–403; these read FFTV…FNMG, LGSL…LGAI, GFLF…LYGA, PVAA…FVFV, and LAPI…YSYF. Disordered regions lie at residues 471-503 and 530-550; these read KLES…TLQD and GQES…PEGT. Residues 533 to 548 are compositionally biased toward polar residues; that stretch reads SCWNKQTSKSEGTQPE. A run of 2 helical transmembrane segments spans residues 593–616 and 622–643; these read CNPW…QWVY and GVAA…LGSA.

This sequence belongs to the SLC12A transporter family. As to expression, ubiquitous with very low level in normal skin.

It is found in the membrane. Its function is as follows. Cation/chloride cotransporter that may play a role in the control of keratinocyte proliferation. The sequence is that of Solute carrier family 12 member 8 (SLC12A8) from Homo sapiens (Human).